The primary structure comprises 414 residues: DNA primase large subunit PriL (414 aa).

4 residues coordinate [4Fe-4S] cluster: C251, C352, C370, and C376.

Belongs to the eukaryotic-type primase large subunit family. Heterodimer of a small subunit (PriS) and a large subunit (PriL). [4Fe-4S] cluster is required as a cofactor.

In terms of biological role, regulatory subunit of DNA primase, an RNA polymerase that catalyzes the synthesis of short RNA molecules used as primers for DNA polymerase during DNA replication. Stabilizes and modulates the activity of the small subunit, increasing the rate of DNA synthesis, and conferring RNA synthesis capability. The DNA polymerase activity may enable DNA primase to also catalyze primer extension after primer synthesis. May also play a role in DNA repair. The sequence is that of DNA primase large subunit PriL from Methanocaldococcus jannaschii (strain ATCC 43067 / DSM 2661 / JAL-1 / JCM 10045 / NBRC 100440) (Methanococcus jannaschii).